The chain runs to 878 residues: Phosphoenolpyruvate carboxylase (878 aa).

Residues H140 and K545 contribute to the active site.

It belongs to the PEPCase type 1 family. It depends on Mg(2+) as a cofactor.

It carries out the reaction oxaloacetate + phosphate = phosphoenolpyruvate + hydrogencarbonate. Functionally, forms oxaloacetate, a four-carbon dicarboxylic acid source for the tricarboxylic acid cycle. The polypeptide is Phosphoenolpyruvate carboxylase (Ectopseudomonas mendocina (strain ymp) (Pseudomonas mendocina)).